The primary structure comprises 82 residues: Sec-independent protein translocase protein TatA (82 aa).

Residues 1-21 form a helical membrane-spanning segment; sequence MGGISIWQLLIIAVIIVLLFG. The segment at 46–82 is disordered; that stretch reads DEPAKDAKKDADFVPQNLEKKEAETVEKQKQNDKEQA.

It belongs to the TatA/E family. In terms of assembly, the Tat system comprises two distinct complexes: a TatABC complex, containing multiple copies of TatA, TatB and TatC subunits, and a separate TatA complex, containing only TatA subunits. Substrates initially bind to the TatABC complex, which probably triggers association of the separate TatA complex to form the active translocon.

Its subcellular location is the cell inner membrane. Its function is as follows. Part of the twin-arginine translocation (Tat) system that transports large folded proteins containing a characteristic twin-arginine motif in their signal peptide across membranes. TatA could form the protein-conducting channel of the Tat system. This Aliivibrio fischeri (strain MJ11) (Vibrio fischeri) protein is Sec-independent protein translocase protein TatA.